Consider the following 472-residue polypeptide: MPKTQSAAGYKAGVKDYKLTYYTPDYTPKDTDLLAAFRFSPQPGVPADEAGAAIAAESSTGTWTTVWTDLLTDMDRYKGKCYHIEPVQGEENSYFAFIAYPLDLFEEGSVTNILTSIVGNVFGFKAIRSLRLEDIRFPVALVKTFQGPPHGIQVERDLLNKYGRPMLGCTIKPKLGLSAKNYGRAVYECLRGGLDFTKDDENINSQPFQRWRDRFLFVADAIHKSQAETGEIKGHYLNVTAPTCEEMMKRAEFAKELGMPIIMHDFLTAGFTANTTLAKWCRDNGVLLHIHRAMHAVIDRQRNHGIHFRVLAKCLRLSGGDHLHSGTVVGKLEGDKASTLGFVDLMREDHIEADRSRGVFFTQDWASMPGVLPVASGGIHVWHMPALVEIFGDDSVLQFGGGTLGHPWGNAPGATANRVALEACVQARNEGRDLYREGGDILREAGKWSPELAAALDLWKEIKFEFETMDKL.

Residues N120 and T170 each contribute to the substrate site. K172 (proton acceptor) is an active-site residue. K174 is a substrate binding site. Residues K198, D200, and E201 each contribute to the Mg(2+) site. K198 carries the N6-carboxylysine modification. H291 serves as the catalytic Proton acceptor. Substrate contacts are provided by R292, H324, and S376. Positions 461–467 match the Interacts with RbcX2 motif; the sequence is EIKFEFE.

This sequence belongs to the RuBisCO large chain family. Type I subfamily. Heterohexadecamer of 8 large chains and 8 small chains; disulfide-linked. The disulfide link is formed within the large subunit homodimers. The exposed C-terminus binds in a cleft in the RbcX2 (shown with endogenous and Anabaena strain CA protein). RbcX2 is displaced by RbcS; as RbcX2 is removed RbcS mediates the ordering of an internal RbcL loop (Thr-64-Leu-70) in a catalytically active conformation. Requires Mg(2+) as cofactor. In terms of processing, the disulfide bond which can form in the large chain dimeric partners within the hexadecamer appears to be associated with oxidative stress and protein turnover.

The protein localises to the carboxysome. It catalyses the reaction 2 (2R)-3-phosphoglycerate + 2 H(+) = D-ribulose 1,5-bisphosphate + CO2 + H2O. The enzyme catalyses D-ribulose 1,5-bisphosphate + O2 = 2-phosphoglycolate + (2R)-3-phosphoglycerate + 2 H(+). Its function is as follows. RuBisCO catalyzes two reactions: the carboxylation of D-ribulose 1,5-bisphosphate, the primary event in carbon dioxide fixation, as well as the oxidative fragmentation of the pentose substrate in the photorespiration process. Both reactions occur simultaneously and in competition at the same active site. This Synechococcus sp. (strain ATCC 27144 / PCC 6301 / SAUG 1402/1) (Anacystis nidulans) protein is Ribulose bisphosphate carboxylase large chain (cbbL).